Reading from the N-terminus, the 732-residue chain is Prolyl endopeptidase-like (732 aa).

Catalysis depends on charge relay system residues serine 575, aspartate 661, and histidine 707.

It belongs to the peptidase S9A family. As to quaternary structure, homodimer.

It localises to the cytoplasm. The protein localises to the cytosol. Serine peptidase whose precise substrate specificity remains unclear. Does not cleave peptides after a arginine or lysine residue. Regulates trans-Golgi network morphology and sorting by regulating the membrane binding of the AP-1 complex. May play a role in the regulation of synaptic vesicle exocytosis. The polypeptide is Prolyl endopeptidase-like (PREPL) (Gallus gallus (Chicken)).